Here is a 449-residue protein sequence, read N- to C-terminus: UDP-N-acetylmuramoylalanine--D-glutamate ligase (449 aa).

Residue Gly113–Thr119 participates in ATP binding.

It belongs to the MurCDEF family.

Its subcellular location is the cytoplasm. It carries out the reaction UDP-N-acetyl-alpha-D-muramoyl-L-alanine + D-glutamate + ATP = UDP-N-acetyl-alpha-D-muramoyl-L-alanyl-D-glutamate + ADP + phosphate + H(+). The protein operates within cell wall biogenesis; peptidoglycan biosynthesis. In terms of biological role, cell wall formation. Catalyzes the addition of glutamate to the nucleotide precursor UDP-N-acetylmuramoyl-L-alanine (UMA). The chain is UDP-N-acetylmuramoylalanine--D-glutamate ligase from Microcystis aeruginosa (strain NIES-843 / IAM M-2473).